We begin with the raw amino-acid sequence, 498 residues long: Nucleoprotein (498 aa).

The Unconventional nuclear localization signal motif lies at 1-18 (MASQGTKRSYEQMETGGE). Positions 1-22 (MASQGTKRSYEQMETGGERQDA) are disordered. The segment covering 8–22 (RSYEQMETGGERQDA) has biased composition (basic and acidic residues). The Bipartite nuclear localization signal signature appears at 198–216 (KRGINDRNFWRGENGRRTR).

Belongs to the influenza viruses nucleoprotein family. Homomultimerizes to form the nucleocapsid. May bind host exportin-1/XPO1. Binds to viral genomic RNA. Protein-RNA contacts are mediated by a combination of electrostatic interactions between positively charged residues and the phosphate backbone and planar interactions between aromatic side chains and bases. In terms of processing, late in virus-infected cells, may be cleaved from a 56-kDa protein to a 53-kDa protein by a cellular caspase. This cleavage might be a marker for the onset of apoptosis in infected cells or have a specific function in virus host interaction.

It is found in the virion. Its subcellular location is the host nucleus. In terms of biological role, encapsidates the negative strand viral RNA, protecting it from nucleases. The encapsidated genomic RNA is termed the ribonucleoprotein (RNP) and serves as template for transcription and replication. The RNP needs to be localized in the host nucleus to start an infectious cycle, but is too large to diffuse through the nuclear pore complex. NP comprises at least 2 nuclear localization signals that are responsible for the active RNP import into the nucleus through cellular importin alpha/beta pathway. Later in the infection, nclear export of RNPs are mediated through viral proteins NEP interacting with M1 which binds nucleoproteins. It is possible that nucleoprotein binds directly host exportin-1/XPO1 and plays an active role in RNPs nuclear export. M1 interaction with RNP seems to hide nucleoprotein's nuclear localization signals. Soon after a virion infects a new cell, M1 dissociates from the RNP under acidification of the virion driven by M2 protein. Dissociation of M1 from RNP unmasks nucleoprotein's nuclear localization signals, targeting the RNP to the nucleus. The polypeptide is Nucleoprotein (Influenza A virus (strain A/New Jersey/8/1976 H1N1)).